The following is a 400-amino-acid chain: Elongation factor Tu (400 aa).

The tr-type G domain maps to 10–208; it reads KPHLNVGTIG…TMDEYFPEPQ (199 aa). Residues 19 to 26 form a G1 region; it reads GHIDHGKT. GTP is bound at residue 19 to 26; it reads GHIDHGKT. Thr-26 contacts Mg(2+). Positions 60 to 64 are G2; sequence GITIN. The segment at 81-84 is G3; that stretch reads DCPG. GTP contacts are provided by residues 81–85 and 136–139; these read DCPGH and NKTD. The tract at residues 136–139 is G4; the sequence is NKTD. Residues 174-176 form a G5 region; it reads SAL.

It belongs to the TRAFAC class translation factor GTPase superfamily. Classic translation factor GTPase family. EF-Tu/EF-1A subfamily. As to quaternary structure, monomer.

The protein resides in the cytoplasm. The catalysed reaction is GTP + H2O = GDP + phosphate + H(+). GTP hydrolase that promotes the GTP-dependent binding of aminoacyl-tRNA to the A-site of ribosomes during protein biosynthesis. This chain is Elongation factor Tu, found in Thermosipho melanesiensis (strain DSM 12029 / CIP 104789 / BI429).